A 299-amino-acid chain; its full sequence is Protease HtpX homolog (299 aa).

Helical transmembrane passes span 14 to 34 and 39 to 59; these read WLLLLVFFLLLGLVGYGVGYL and GFGGLILALVIGFIYAVTMIF. H143 is a Zn(2+) binding site. Residue E144 is part of the active site. H147 contributes to the Zn(2+) binding site. The next 2 membrane-spanning stretches (helical) occupy residues 153–173 and 198–218; these read IRISTIAVALASAITMLAVMA and IILLIISLIAIILAPLAATLV. E227 contacts Zn(2+).

It belongs to the peptidase M48B family. The cofactor is Zn(2+).

It is found in the cell membrane. This is Protease HtpX homolog from Streptococcus thermophilus (strain ATCC BAA-491 / LMD-9).